The following is a 94-amino-acid chain: MTKSELIESLVEKNHSISVKSVENAVKEILEHMSQALESGDRIEIRGFGSFSLHFRQPRVGRNPKTGAQVKLDAKCVPHFKAGKELRERVDFNA.

It belongs to the bacterial histone-like protein family. In terms of assembly, heterodimer of an alpha and a beta chain.

This protein is one of the two subunits of integration host factor, a specific DNA-binding protein that functions in genetic recombination as well as in transcriptional and translational control. The protein is Integration host factor subunit beta of Mannheimia succiniciproducens (strain KCTC 0769BP / MBEL55E).